A 282-amino-acid chain; its full sequence is Pantothenate synthetase (282 aa).

32 to 39 is a binding site for ATP; that stretch reads MGALHEGH. The active-site Proton donor is the H39. Residue Q63 coordinates (R)-pantoate. Beta-alanine is bound at residue Q63. 149–152 is an ATP binding site; that stretch reads GEKD. Q155 provides a ligand contact to (R)-pantoate. Residues V178 and 186–189 each bind ATP; that span reads LSSR.

This sequence belongs to the pantothenate synthetase family. In terms of assembly, homodimer.

Its subcellular location is the cytoplasm. The catalysed reaction is (R)-pantoate + beta-alanine + ATP = (R)-pantothenate + AMP + diphosphate + H(+). It participates in cofactor biosynthesis; (R)-pantothenate biosynthesis; (R)-pantothenate from (R)-pantoate and beta-alanine: step 1/1. Functionally, catalyzes the condensation of pantoate with beta-alanine in an ATP-dependent reaction via a pantoyl-adenylate intermediate. This Paracoccus denitrificans (strain Pd 1222) protein is Pantothenate synthetase.